Consider the following 115-residue polypeptide: U3-lycotoxin-Ls1k (115 aa).

Positions 1 to 20 are cleaved as a signal peptide; sequence MKFVLLFGVLLVALFSYSSA. Residues 21–44 constitute a propeptide that is removed on maturation; sequence EMLDDFGQADEDELLSLIEKEEAR. Disulfide bonds link Cys48-Cys63, Cys55-Cys72, Cys62-Cys87, and Cys74-Cys85.

The protein belongs to the neurotoxin 19 (CSTX) family. 01 subfamily. As to expression, expressed by the venom gland.

The protein resides in the secreted. The polypeptide is U3-lycotoxin-Ls1k (Lycosa singoriensis (Wolf spider)).